Reading from the N-terminus, the 351-residue chain is Cytoplasmic dynein 2 light intermediate chain 1 (351 aa).

The segment at 303 to 335 (GTLKAVQDPARDPQYAESEVDEMRVQKDQELEH) is disordered. Basic and acidic residues predominate over residues 323-335 (DEMRVQKDQELEH).

Belongs to the dynein light intermediate chain family. In terms of assembly, light intermediate chain of the cytoplasmic dynein complex 2, a multisubunit complex composed at least of eleven different proteins. The cytoplasmic dynein 2 complex consists of two catalytic heavy chains (HCs) and a number of non-catalytic subunits presented by intermediate chains (ICs), light intermediate chains (LICs) and light chains (LCs). Among them, a heavy chain (DYNC2H1), two intermediate chains (DYNC2I2 and DYNC2I1), a light intermediate chain (DYNC2LI1), and a light chain (DYNLT2B) are unique to the dynein-2 complex, but a subset of light chains are also shared by dynein-1 and dynein-2 complexes. Dynein-2 complex is built around two copies of cytoplasmic dynein 2 heavy chain 1 (DYNC2H1). The C-terminal region forms the motor domain, which converts the energy from ATP hydrolysis into movement. Its N-terminal region forms the tail, an extended structure that binds the other subunits and holds the two heavy chains in a homodimer. Interacts with DYNC2H1 (via N-terminus); this interaction stabilizes the dynein-2 complex structure. In terms of tissue distribution, specifically expressed by ciliated cells in brain, lung, spleen, testis and kidney (at protein level). Enriched in the ependymal layer lining the lateral ventricles (at protein level).

The protein resides in the cytoplasm. It is found in the cell projection. Its subcellular location is the cilium. The protein localises to the cytoskeleton. It localises to the cilium basal body. The protein resides in the cilium axoneme. It is found in the microtubule organizing center. Its subcellular location is the centrosome. Acts as one of several non-catalytic accessory components of the cytoplasmic dynein 2 complex (dynein-2 complex), a motor protein complex that drives the movement of cargos along microtubules within cilia and flagella in concert with the intraflagellar transport (IFT) system, facilitating the assembly of these organelles. Involved in the regulation of ciliary length. The polypeptide is Cytoplasmic dynein 2 light intermediate chain 1 (Dync2li1) (Mus musculus (Mouse)).